The chain runs to 336 residues: Succinylglutamate desuccinylase (336 aa).

Zn(2+)-binding residues include histidine 59, glutamate 62, and histidine 151. Residue glutamate 215 is part of the active site.

It belongs to the AspA/AstE family. Succinylglutamate desuccinylase subfamily. Zn(2+) serves as cofactor.

The enzyme catalyses N-succinyl-L-glutamate + H2O = L-glutamate + succinate. Its pathway is amino-acid degradation; L-arginine degradation via AST pathway; L-glutamate and succinate from L-arginine: step 5/5. Its function is as follows. Transforms N(2)-succinylglutamate into succinate and glutamate. This is Succinylglutamate desuccinylase from Pseudomonas fluorescens (strain Pf0-1).